Consider the following 533-residue polypeptide: Invertase (533 aa).

The N-terminal stretch at 1–22 is a signal peptide; the sequence is MVQVLSVLVIPLLTLFFGYVAS. Substrate contacts are provided by residues 47-50 and Q68; that span reads WMND. Residue D50 is part of the active site. N-linked (GlcNAc...) asparagine glycosylation occurs at N72. Residue 110-111 participates in substrate binding; it reads FS. N119, N120, and N126 each carry an N-linked (GlcNAc...) asparagine glycan. 178–179 contributes to the substrate binding site; that stretch reads RD. N219 is a glycosylation site (N-linked (GlcNAc...) asparagine). W314 lines the substrate pocket. N-linked (GlcNAc...) asparagine glycosylation is found at N334, N392, and N419.

The protein belongs to the glycosyl hydrolase 32 family.

It carries out the reaction Hydrolysis of terminal non-reducing beta-D-fructofuranoside residues in beta-D-fructofuranosides.. The sequence is that of Invertase (INV) from Schwanniomyces occidentalis (Yeast).